A 220-amino-acid chain; its full sequence is Ribose-5-phosphate isomerase A (220 aa).

Substrate is bound by residues 28 to 31 (TGST), 81 to 84 (DGAD), and 94 to 97 (KGGG). The active-site Proton acceptor is the Glu-103. Lys-121 contributes to the substrate binding site.

Belongs to the ribose 5-phosphate isomerase family. In terms of assembly, homodimer.

It carries out the reaction aldehydo-D-ribose 5-phosphate = D-ribulose 5-phosphate. It functions in the pathway carbohydrate degradation; pentose phosphate pathway; D-ribose 5-phosphate from D-ribulose 5-phosphate (non-oxidative stage): step 1/1. In terms of biological role, catalyzes the reversible conversion of ribose-5-phosphate to ribulose 5-phosphate. The protein is Ribose-5-phosphate isomerase A of Hydrogenovibrio crunogenus (strain DSM 25203 / XCL-2) (Thiomicrospira crunogena).